Here is a 286-residue protein sequence, read N- to C-terminus: Bifunctional protein FolD 2 (286 aa).

NADP(+) contacts are provided by residues 165–167, threonine 192, and valine 233; that span reads GRG.

This sequence belongs to the tetrahydrofolate dehydrogenase/cyclohydrolase family. In terms of assembly, homodimer.

It carries out the reaction (6R)-5,10-methylene-5,6,7,8-tetrahydrofolate + NADP(+) = (6R)-5,10-methenyltetrahydrofolate + NADPH. The enzyme catalyses (6R)-5,10-methenyltetrahydrofolate + H2O = (6R)-10-formyltetrahydrofolate + H(+). The protein operates within one-carbon metabolism; tetrahydrofolate interconversion. Catalyzes the oxidation of 5,10-methylenetetrahydrofolate to 5,10-methenyltetrahydrofolate and then the hydrolysis of 5,10-methenyltetrahydrofolate to 10-formyltetrahydrofolate. The sequence is that of Bifunctional protein FolD 2 from Rhodococcus jostii (strain RHA1).